A 157-amino-acid polypeptide reads, in one-letter code: Transcription elongation factor GreA (157 aa).

It belongs to the GreA/GreB family.

Functionally, necessary for efficient RNA polymerase transcription elongation past template-encoded arresting sites. The arresting sites in DNA have the property of trapping a certain fraction of elongating RNA polymerases that pass through, resulting in locked ternary complexes. Cleavage of the nascent transcript by cleavage factors such as GreA or GreB allows the resumption of elongation from the new 3'terminus. GreA releases sequences of 2 to 3 nucleotides. This Mesorhizobium japonicum (strain LMG 29417 / CECT 9101 / MAFF 303099) (Mesorhizobium loti (strain MAFF 303099)) protein is Transcription elongation factor GreA.